We begin with the raw amino-acid sequence, 1278 residues long: SMC5-SMC6 complex localization factor protein 2 (1278 aa).

Disordered stretches follow at residues 1–235, 248–337, 443–491, and 509–582; these read MTRR…LGAR, EQKK…KRTE, RINS…FIRH, and EPED…KETK. Over residues 39–50 the composition is skewed to basic and acidic residues; it reads KRTESPGDRKQS. Residues 94–103 show a composition bias toward basic residues; sequence SSPKKLKPKR. Composition is skewed to basic and acidic residues over residues 118-133, 156-174, 180-199, and 248-258; these read GGKE…ESRR, LPKE…ERRK, ESNR…DSRK, and EQKKLRKEQME. 2 stretches are compositionally biased toward polar residues: residues 259-277 and 318-329; these read QRIN…SLKS and SDSWELSGSKQN. 2 stretches are compositionally biased toward basic and acidic residues: residues 449-463 and 469-489; these read KEQR…KSTK and KARE…EKFI. Residues 519-540 are compositionally biased toward polar residues; that stretch reads ADSAPSNAGHHSSRNSDQVHSA. S591 carries the post-translational modification Phosphoserine. Disordered regions lie at residues 598–724, 739–764, and 798–820; these read PLNA…EEEE, RTPT…MKEY, and IRQG…DDGD. Residues 609–630 are compositionally biased toward basic and acidic residues; sequence PKKDKERSSSKERSGHSTESSK. Low complexity-rich tracts occupy residues 643-654, 666-675, and 688-697; these read SNESSGKNSGGS, PPAALEVVPS, and SGNSNAGSNA. Over residues 707–724 the composition is skewed to acidic residues; that stretch reads DSDEESLGYTLESDEEEE. Phosphoserine is present on residues S708, S712, and S719. The interval 740–1278 is interaction with SIMC1; it reads TPTTSGKPPA…QLHDFWVPDS (539 aa). The NSE6-like domain stretch occupies residues 769 to 1271; the sequence is TYTNTLERLV…NCRPTQGQLH (503 aa). The interval 807-1278 is required for interaction with SLF1 and RAD18; it reads PLRTGDQDST…QLHDFWVPDS (472 aa).

Belongs to the FAM178 family. As to quaternary structure, forms a heterodimer with SIMC1. Interacts with SLF1 (via N-terminus); this interaction links RAD18 to the SMC5-SMC6 complex. Interacts with RAD18; this interaction is increased in a SLF1-dependent manner. Interacts with SMC5 and SMC6.

Its subcellular location is the nucleus. It is found in the PML body. Its function is as follows. Plays a role in the DNA damage response (DDR) pathway by regulating postreplication repair of UV-damaged DNA and genomic stability maintenance. The SLF1-SLF2 complex acts to link RAD18 with the SMC5-SMC6 complex at replication-coupled interstrand cross-links (ICL) and DNA double-strand breaks (DSBs) sites on chromatin during DNA repair in response to stalled replication forks. Promotes the recruitment of the SMC5-SMC6 complex to DNA lesions. May play a role in SMC5-SMC6 complex recruitment for viral restriction. Forms a complex with SIMC1 and this complex is required to recruit SMC5-SMC6 complex to PML nuclear bodies and sites of viral replication. The sequence is that of SMC5-SMC6 complex localization factor protein 2 from Mus musculus (Mouse).